Consider the following 57-residue polypeptide: Large ribosomal subunit protein eL20 (57 aa).

It belongs to the eukaryotic ribosomal protein eL20 family. Part of the 50S ribosomal subunit. Binds 23S rRNA.

The sequence is that of Large ribosomal subunit protein eL20 from Natronomonas pharaonis (strain ATCC 35678 / DSM 2160 / CIP 103997 / JCM 8858 / NBRC 14720 / NCIMB 2260 / Gabara) (Halobacterium pharaonis).